A 306-amino-acid chain; its full sequence is Curved DNA-binding protein (306 aa).

The 65-residue stretch at 5 to 69 (DYYAIMGVKP…QRRAEYDQMW (65 aa)) folds into the J domain.

Its subcellular location is the cytoplasm. It localises to the nucleoid. Its function is as follows. DNA-binding protein that preferentially recognizes a curved DNA sequence. It is probably a functional analog of DnaJ; displays overlapping activities with DnaJ, but functions under different conditions, probably acting as a molecular chaperone in an adaptive response to environmental stresses other than heat shock. Lacks autonomous chaperone activity; binds native substrates and targets them for recognition by DnaK. Its activity is inhibited by the binding of CbpM. The sequence is that of Curved DNA-binding protein from Escherichia fergusonii (strain ATCC 35469 / DSM 13698 / CCUG 18766 / IAM 14443 / JCM 21226 / LMG 7866 / NBRC 102419 / NCTC 12128 / CDC 0568-73).